The sequence spans 250 residues: 5-oxoprolinase subunit A (250 aa).

It belongs to the LamB/PxpA family. Forms a complex composed of PxpA, PxpB and PxpC.

The catalysed reaction is 5-oxo-L-proline + ATP + 2 H2O = L-glutamate + ADP + phosphate + H(+). Functionally, catalyzes the cleavage of 5-oxoproline to form L-glutamate coupled to the hydrolysis of ATP to ADP and inorganic phosphate. This Nocardia farcinica (strain IFM 10152) protein is 5-oxoprolinase subunit A.